A 295-amino-acid chain; its full sequence is Ribosomal RNA small subunit methyltransferase A (295 aa).

6 residues coordinate S-adenosyl-L-methionine: asparagine 29, leucine 31, glycine 56, glutamate 77, aspartate 102, and asparagine 127.

It belongs to the class I-like SAM-binding methyltransferase superfamily. rRNA adenine N(6)-methyltransferase family. RsmA subfamily.

The protein localises to the cytoplasm. It carries out the reaction adenosine(1518)/adenosine(1519) in 16S rRNA + 4 S-adenosyl-L-methionine = N(6)-dimethyladenosine(1518)/N(6)-dimethyladenosine(1519) in 16S rRNA + 4 S-adenosyl-L-homocysteine + 4 H(+). Functionally, specifically dimethylates two adjacent adenosines (A1518 and A1519) in the loop of a conserved hairpin near the 3'-end of 16S rRNA in the 30S particle. May play a critical role in biogenesis of 30S subunits. The chain is Ribosomal RNA small subunit methyltransferase A from Anoxybacillus flavithermus (strain DSM 21510 / WK1).